Here is a 490-residue protein sequence, read N- to C-terminus: 5'-3' exonuclease PLD3 (490 aa).

Residues 1–38 (MKPKLMYQELKVPAEEPANELPMNEIEAWKAAEKKARW) lie on the Cytoplasmic side of the membrane. Residues 39 to 59 (VLLVLILAVVGFGALMTQLFL) form a helical; Signal-anchor for type II membrane protein membrane-spanning segment. Over 60–490 (WEYGDLHLFG…DSVGNACRLL (431 aa)) the chain is Lumenal. Intrachain disulfides connect C77-C239 and C81-C237. N97 and N132 each carry an N-linked (GlcNAc...) asparagine glycan. The 28-residue stretch at 196 to 223 (THGVLHTKFWVVDQTHFYLGSANMDWRS) folds into the PLD phosphodiesterase 1 domain. Catalysis depends on residues H201, K203, and D208. Catalysis depends on H201, which acts as the Proton donor. Residues H201 and K203 each coordinate phosphate. N218 contacts phosphate. N236, N284, and N387 each carry an N-linked (GlcNAc...) asparagine glycan. The cysteines at positions 366 and 487 are disulfide-linked. One can recognise a PLD phosphodiesterase 2 domain in the interval 411 to 437 (YARVNHNKYMVTERATYIGTSNWSGNY). H416 contacts phosphate. The active-site Nucleophile is the H416. F438 contributes to the Mg(2+) binding site.

The protein belongs to the phospholipase D family. Homodimer. Interacts with APP. In terms of processing, N-glycosylated. Proteolytically processed to a soluble form that is stable within endosomes and lysosomes. During transport through the secretory pathway becomes proteolysed by cysteine proteases, thereby releasing a stable soluble lysosomal lumenal polypeptide, whereas the transmembrane-bound fragment is rapidly degraded. Its transport route to lysosomes involves ubiquitination and the ESCRT complex. Post-translationally, ubiquitinated. Ubiquitination mediates sorting into lysosomes.

The protein resides in the endoplasmic reticulum membrane. The protein localises to the lysosome lumen. Its subcellular location is the early endosome membrane. It is found in the late endosome membrane. It localises to the golgi apparatus membrane. The protein resides in the endosome membrane. The enzyme catalyses Exonucleolytic cleavage in the 5'- to 3'-direction to yield nucleoside 3'-phosphates.. It catalyses the reaction a 5'-end 5'-dephospho-ribonucleotidyl-ribonucleotide-RNA + H2O = a ribonucleoside 3'-phosphate + a 5'-end dephospho-ribonucleoside-RNA + H(+). It carries out the reaction a ribonucleoside 3'-phosphate-2'-3'-cyclophospho-GMP + H2O = a ribonucleoside 3'-phosphate + 2',3'-cyclophospho-GMP + H(+). The catalysed reaction is a 5'-end 5'-dephospho-2'-deoxyribonucleotidyl-2'-deoxyribonucleotide in single-stranded DNA + H2O = a 5'-end dephospho-2'-deoxyribonucleoside in single-stranded DNA + a 2'-deoxyribonucleoside 3'-phosphate + H(+). The enzyme catalyses a 5'-end 5'-phospho-2'-deoxyribonucleotide in single-stranded DNA + H2O = a 5'-end 5'-dephospho-2'-deoxyribonucleotide in single-stranded DNA + phosphate. It catalyses the reaction a 3-lyso-sn-glycero-1-phospho-(3'-acyl-1'-sn-glycerol) + a 1-acyl-sn-glycerol = a 3-acyl-sn-glycero-1-phospho-(3'-acyl-1'-sn-glycerol) + glycerol. It carries out the reaction 3-lyso-sn-glycero-1-phospho-(3'-(9Z-octadecenoyl)-1'-sn-glycerol) + 1-(9Z-octadecenoyl)-sn-glycerol = 3-(9Z-octadecenoyl)-sn-glycero-1-phospho-(3'-(9Z-octadecenoyl)-1'-sn-glycerol) + glycerol. Functionally, 5'-&gt;3' exonuclease that hydrolyzes the phosphodiester bond of single-stranded DNA (ssDNA) and RNA molecules to form nucleoside 3'-monophosphates and 5'-end 5'-hydroxy deoxyribonucleotide/ribonucleotide fragments. Partially redundant with PLD4, can cleave all four nucleotides displaying higher efficiency for ssDNA and RNA fragments initiated with uridine and guanosine residues and lower efficiency for cytidine-initiated substrates. As a result, it does not always degrade polynucleotides to the single nucleotide level, it can stall at specific sites sparing certain fragments from exonucleolytic degradation. Processes self and pathogenic ssDNA and RNA molecules that reach the endolysosomal compartment via phagocytosis or autophagy and may serve as 'danger' signals for recognition by innate immune receptors such as toll-like receptors (TLRs). Degrades mitochondrial CpG-rich ssDNA fragments to prevent TLR9 activation and autoinflammatory response, but it can cleave viral RNA to generate ligands for TLR7 activation and initiate antiviral immune responses. In plasmacytoid dendritic cells, it cooperates with endonuclease RNASET2 to release 2',3'-cyclic guanosine monophosphate (2',3'-cGMP), a potent stimulatory ligand for TLR7. Produces 2',3'-cGMPs and cytidine-rich RNA fragments that occupy TLR7 ligand-binding pockets and trigger a signaling-competent state. Can exert polynucleotide phosphatase activity toward 5'-phosphorylated ssDNA substrates although at a slow rate. Transphosphatidylase that catalyzes the exchange with R to S stereo-inversion of the glycerol moiety between (S,R)-lysophosphatidylglycerol (LPG) and monoacylglycerol (MAG) substrates to yield (S,S)-bis(monoacylglycero)phosphate (BMP). Can synthesize a variety of (S,S)-BMPs representing the main phospholipid constituent of lysosomal intralumenal vesicle (ILV) membranes that bind acid hydrolases for lipid degradation. Regulates the homeostasis and interorganellar communication of the endolysosomal system with an overall impact on cellular removal of dysfunctional organelles via autophagy as well as proper protein and lipid turnover. May play a role in myotube formation in response to ER stress. The sequence is that of 5'-3' exonuclease PLD3 (PLD3) from Pongo abelii (Sumatran orangutan).